A 931-amino-acid polypeptide reads, in one-letter code: Netrin receptor UNC5C (931 aa).

The signal sequence occupies residues 1–40; that stretch reads MRKGLRATAARCGLGLGYLLQMLVLPALALLSASGTGSAA. The Extracellular portion of the chain corresponds to 41-380; it reads QDDDFFHELP…APDSDDVALY (340 aa). The Ig-like domain maps to 62 to 159; that stretch reads PHFLIEPEEA…AGTTKSRKAY (98 aa). 9 disulfide bridges follow: Cys83-Cys144, Cys95-Cys142, Cys188-Cys239, Cys272-Cys309, Cys276-Cys313, Cys287-Cys299, Cys328-Cys362, Cys332-Cys367, and Cys340-Cys352. In terms of domain architecture, Ig-like C2-type spans 161 to 256; that stretch reads RIAYLRKTFE…KRKSTTATVI (96 aa). An N-linked (GlcNAc...) asparagine glycan is attached at Asn236. 2 consecutive TSP type-1 domains span residues 260–314 and 316–368; these read NGGW…TLCP and DGRW…GLCM. A glycan (N-linked (GlcNAc...) asparagine) is linked at Asn361. A helical membrane pass occupies residues 381-401; the sequence is VGIVIAVIVCLAISVVVALFV. At 402–931 the chain is on the cytoplasmic side; that stretch reads YRKNHRDFES…VVSLAAEGQY (530 aa). The tract at residues 402-931 is required for netrin-mediated axon repulsion of neuronal growth cones; that stretch reads YRKNHRDFES…VVSLAAEGQY (530 aa). The residue at position 502 (Ser502) is a Phosphoserine. Residues 530-673 form the ZU5 domain; the sequence is CTAFGSFNSL…LSTYALVGHS (144 aa). Tyr568 carries the post-translational modification Phosphotyrosine. The segment at 694-712 is interaction with DCC; sequence SLEYSIRVYCLDDTQDALK. The Death domain occupies 850–929; it reads QKLCSSLDAP…ETVVSLAAEG (80 aa).

The protein belongs to the unc-5 family. In terms of assembly, interacts with DCC (via cytoplasmic domain). Interacts (tyrosine phosphorylated form) with PTPN11. Interacts (via extracellular domain) with FLRT3 (via extracellular domain). Interacts (via Ig-like C2-type domain) with DSCAM (via extracellular domain). Interacts (via death domain) with DAPK1. Interacts (via cytoplasmic domain) with TUBB3; this interaction is decreased by NTN1/Netrin-1. Proteolytically cleaved by caspases during apoptosis. The cleavage does not take place when the receptor is associated with netrin ligand. Its cleavage by caspases is required to induce apoptosis. Post-translationally, phosphorylated on different cytoplasmic tyrosine residues. Phosphorylation of Tyr-568 leads to an interaction with PTPN11 phosphatase, suggesting that its activity is regulated by phosphorylation/dephosphorylation. Tyrosine phosphorylation is netrin-dependent. As to expression, mainly expressed in brain. Expressed in temporal lobe cortical neurons and in neurons of the hippocampal pyramidal layer. Also expressed in kidney. Not expressed in developing or adult lung.

The protein localises to the cell membrane. The protein resides in the cell surface. It is found in the synapse. It localises to the synaptosome. Its subcellular location is the cell projection. The protein localises to the axon. The protein resides in the dendrite. It is found in the growth cone. It localises to the lamellipodium. Its subcellular location is the filopodium. Its function is as follows. Receptor for netrin required for axon guidance. Mediates axon repulsion of neuronal growth cones in the developing nervous system upon ligand binding. NTN1/Netrin-1 binding might cause dissociation of UNC5C from polymerized TUBB3 in microtubules and thereby lead to increased microtubule dynamics and axon repulsion. Axon repulsion in growth cones may also be caused by its association with DCC that may trigger signaling for repulsion. Might also collaborate with DSCAM in NTN1-mediated axon repulsion independently of DCC. Also involved in corticospinal tract axon guidance independently of DCC. Involved in dorsal root ganglion axon projection towards the spinal cord. It also acts as a dependence receptor required for apoptosis induction when not associated with netrin ligand. The sequence is that of Netrin receptor UNC5C (UNC5C) from Homo sapiens (Human).